The following is a 352-amino-acid chain: S-adenosylmethionine:tRNA ribosyltransferase-isomerase (352 aa).

Belongs to the QueA family. In terms of assembly, monomer.

It localises to the cytoplasm. It carries out the reaction 7-aminomethyl-7-carbaguanosine(34) in tRNA + S-adenosyl-L-methionine = epoxyqueuosine(34) in tRNA + adenine + L-methionine + 2 H(+). Its pathway is tRNA modification; tRNA-queuosine biosynthesis. Functionally, transfers and isomerizes the ribose moiety from AdoMet to the 7-aminomethyl group of 7-deazaguanine (preQ1-tRNA) to give epoxyqueuosine (oQ-tRNA). This chain is S-adenosylmethionine:tRNA ribosyltransferase-isomerase, found in Vibrio cholerae serotype O1 (strain ATCC 39315 / El Tor Inaba N16961).